Here is a 342-residue protein sequence, read N- to C-terminus: L-threonine 3-dehydrogenase (342 aa).

C38 serves as a coordination point for Zn(2+). Active-site charge relay system residues include T40 and H43. H63, E64, C93, C96, C99, and C107 together coordinate Zn(2+). Residues I175, D195, R200, 262-264 (LGI), and 286-287 (IY) contribute to the NAD(+) site.

The protein belongs to the zinc-containing alcohol dehydrogenase family. In terms of assembly, homotetramer. Zn(2+) is required as a cofactor.

It is found in the cytoplasm. It catalyses the reaction L-threonine + NAD(+) = (2S)-2-amino-3-oxobutanoate + NADH + H(+). It participates in amino-acid degradation; L-threonine degradation via oxydo-reductase pathway; glycine from L-threonine: step 1/2. Catalyzes the NAD(+)-dependent oxidation of L-threonine to 2-amino-3-ketobutyrate. This chain is L-threonine 3-dehydrogenase, found in Burkholderia lata (strain ATCC 17760 / DSM 23089 / LMG 22485 / NCIMB 9086 / R18194 / 383).